Reading from the N-terminus, the 323-residue chain is GILT-like protein C02D5.2 (323 aa).

Residues leucine 13–isoleucine 32 form a helical membrane-spanning segment. Asparagine 35 carries an N-linked (GlcNAc...) asparagine glycan. 2 helical membrane passes run serine 37–leucine 59 and tyrosine 87–leucine 104. Residue asparagine 289 is glycosylated (N-linked (GlcNAc...) asparagine).

This sequence belongs to the GILT family.

Its subcellular location is the membrane. The chain is GILT-like protein C02D5.2 from Caenorhabditis elegans.